Reading from the N-terminus, the 334-residue chain is Phospho-N-acetylmuramoyl-pentapeptide-transferase (334 aa).

The next 10 helical transmembrane spans lie at 11–31 (GAGL…IPLM), 55–75 (PTMG…IFAP), 84–104 (LIIA…DDYI), 124–144 (VGLA…GTAV), 158–178 (PLYY…VNFA), 184–204 (LLGG…ALAL), 205–225 (GQTD…GFLH), 233–253 (IFMG…LAVL), 258–278 (FLLV…ILQV), and 311–331 (LFWG…PGML).

The protein belongs to the glycosyltransferase 4 family. MraY subfamily. Requires Mg(2+) as cofactor.

The protein resides in the cell membrane. The catalysed reaction is UDP-N-acetyl-alpha-D-muramoyl-L-alanyl-gamma-D-glutamyl-meso-2,6-diaminopimeloyl-D-alanyl-D-alanine + di-trans,octa-cis-undecaprenyl phosphate = di-trans,octa-cis-undecaprenyl diphospho-N-acetyl-alpha-D-muramoyl-L-alanyl-D-glutamyl-meso-2,6-diaminopimeloyl-D-alanyl-D-alanine + UMP. The protein operates within cell wall biogenesis; peptidoglycan biosynthesis. In terms of biological role, catalyzes the initial step of the lipid cycle reactions in the biosynthesis of the cell wall peptidoglycan: transfers peptidoglycan precursor phospho-MurNAc-pentapeptide from UDP-MurNAc-pentapeptide onto the lipid carrier undecaprenyl phosphate, yielding undecaprenyl-pyrophosphoryl-MurNAc-pentapeptide, known as lipid I. In Symbiobacterium thermophilum (strain DSM 24528 / JCM 14929 / IAM 14863 / T), this protein is Phospho-N-acetylmuramoyl-pentapeptide-transferase.